Reading from the N-terminus, the 24-residue chain is Probable caffeoyl-CoA O-methyltransferase (24 aa).

It belongs to the class I-like SAM-binding methyltransferase superfamily. Cation-dependent O-methyltransferase family. CCoAMT subfamily. Requires a divalent metal cation as cofactor.

It carries out the reaction (E)-caffeoyl-CoA + S-adenosyl-L-methionine = (E)-feruloyl-CoA + S-adenosyl-L-homocysteine + H(+). It functions in the pathway aromatic compound metabolism; phenylpropanoid biosynthesis. In terms of biological role, methylates caffeoyl-CoA to feruloyl-CoA and 5-hydroxyferuloyl-CoA to sinapoyl-CoA. Plays a role in the synthesis of feruloylated polysaccharides. Involved in the reinforcement of the plant cell wall. Also involved in the responding to wounding or pathogen challenge by the increased formation of cell wall-bound ferulic acid polymers. This chain is Probable caffeoyl-CoA O-methyltransferase, found in Pinus pinaster (Maritime pine).